The primary structure comprises 222 residues: UPF0758 protein CT0611 (222 aa).

The MPN domain maps to 100 to 222 (KVKGARDVFE…WFSFRDHALL (123 aa)). Positions 171, 173, and 184 each coordinate Zn(2+). The JAMM motif signature appears at 171–184 (HNHPSGDVQPSNAD).

The protein belongs to the UPF0758 family.

The sequence is that of UPF0758 protein CT0611 from Chlorobaculum tepidum (strain ATCC 49652 / DSM 12025 / NBRC 103806 / TLS) (Chlorobium tepidum).